A 460-amino-acid chain; its full sequence is C4-dicarboxylate transport protein (460 aa).

Transmembrane regions (helical) follow at residues 20–40 (SLYF…HFYP), 56–76 (LIKM…IAGM), 88–108 (YALL…LIVV), 153–173 (IVGA…VIFG), 200–220 (IINM…AFTI), 234–254 (LMIC…GAIC), 301–321 (VVGL…SIYL), 342–362 (ITLL…TGSG), and 364–384 (IVLA…LALI). Positions 438–460 (PEDDLGVAEGPTPANAVNTTKTV) are disordered.

It belongs to the dicarboxylate/amino acid:cation symporter (DAACS) (TC 2.A.23) family.

The protein localises to the cell inner membrane. In terms of biological role, responsible for the transport of dicarboxylates such as succinate, fumarate, and malate from the periplasm across the membrane. The protein is C4-dicarboxylate transport protein of Pseudomonas savastanoi pv. phaseolicola (strain 1448A / Race 6) (Pseudomonas syringae pv. phaseolicola (strain 1448A / Race 6)).